A 664-amino-acid chain; its full sequence is SPARC-like protein 1 (664 aa).

Residues Met1 to Ala16 form the signal peptide. Positions Ser25–Thr34 are O-glycosylated at one additional site. The tract at residues Ser28–Asp360 is disordered. O-linked (GalNAc...) threonine glycans are attached at residues Thr31 and Thr40. Ser44 carries O-linked (GalNAc...) serine glycosylation. The span at Asp62 to Ser84 shows a compositional bias: basic and acidic residues. 3 positions are modified to phosphoserine: Ser76, Ser84, and Ser92. Residues Ala85 to Glu94 show a composition bias toward polar residues. The span at Gly96–Gly105 shows a compositional bias: basic and acidic residues. Thr116 is a glycosylation site (O-linked (GalNAc...) threonine). The span at Leu120–Glu136 shows a compositional bias: basic and acidic residues. The segment covering Ser146 to Ser156 has biased composition (polar residues). The N-linked (GlcNAc...) asparagine glycan is linked to Asn169. Basic residues predominate over residues Tyr170 to Lys180. The residue at position 171 (Ser171) is a Phosphoserine. 2 N-linked (GlcNAc...) asparagine glycosylation sites follow: Asn176 and Asn196. Over residues Gln188–Asn199 the composition is skewed to polar residues. Residues Asp216 to Glu235 are compositionally biased toward basic and acidic residues. Composition is skewed to acidic residues over residues Asp236 to Asp248 and Asp259 to Asn280. Position 272 is a phosphoserine (Ser272). The N-linked (GlcNAc...) asparagine glycan is linked to Asn280. The span at Ser306 to Val316 shows a compositional bias: basic and acidic residues. Residue Thr331 is glycosylated (O-linked (GalNAc...) threonine). Over residues Asp339–Gly349 the composition is skewed to acidic residues. A phosphoserine mark is found at Ser358 and Ser365. Residues Glu388–Arg426 are disordered. O-linked (GalNAc...) threonine glycosylation occurs at Thr398. Basic and acidic residues predominate over residues Pro401–Glu411. N-linked (GlcNAc...) asparagine glycosylation occurs at Asn412. A Phosphoserine modification is found at Ser420. The region spanning Ser432–Cys454 is the Follistatin-like domain. Cystine bridges form between Cys433–Cys444, Cys438–Cys454, Cys456–Cys490, Cys462–Cys483, Cys472–Cys509, Cys515–Cys626, and Cys634–Cys650. Positions Gly450 to Ser511 constitute a Kazal-like domain. Asn476 carries N-linked (GlcNAc...) asparagine glycosylation. In terms of domain architecture, EF-hand spans Pro622–Asp657. 5 residues coordinate Ca(2+): Asp635, Asn637, Asp639, His641, and Glu646.

The protein belongs to the SPARC family. Post-translationally, N- and O-glycosylated. O-glycosylated with a core 1 or possibly core 8 glycan. In terms of tissue distribution, highly expressed in lymph node, brain, heart, lung, skeletal muscle, ovary, small intestine, and colon, with lower levels in placenta, pancreas, testis, spleen, and thymus, and no expression in kidney, liver, and peripheral blood leukocytes.

It localises to the secreted. The protein resides in the extracellular space. It is found in the extracellular matrix. The protein is SPARC-like protein 1 (SPARCL1) of Homo sapiens (Human).